Reading from the N-terminus, the 141-residue chain is MAVQRTFSIIKPDAVAKNVIGKITTRFEEAGLKIVASKIKQLSKAEAEGFYAEHSERGFFGDLVAFMTSGPVVVQVLEGENAIALNRELMGATNPKEAAAGTIRADFAESIDANAVHGSDSEAAAAREIAYFFAATEVTTR.

ATP-binding residues include Lys-11, Phe-59, Arg-87, Thr-93, Arg-104, and Asn-114. The active-site Pros-phosphohistidine intermediate is the His-117.

The protein belongs to the NDK family. As to quaternary structure, homotetramer. The cofactor is Mg(2+).

The protein localises to the cytoplasm. The enzyme catalyses a 2'-deoxyribonucleoside 5'-diphosphate + ATP = a 2'-deoxyribonucleoside 5'-triphosphate + ADP. It catalyses the reaction a ribonucleoside 5'-diphosphate + ATP = a ribonucleoside 5'-triphosphate + ADP. Functionally, major role in the synthesis of nucleoside triphosphates other than ATP. The ATP gamma phosphate is transferred to the NDP beta phosphate via a ping-pong mechanism, using a phosphorylated active-site intermediate. The protein is Nucleoside diphosphate kinase of Pseudomonas putida (strain W619).